The following is a 164-amino-acid chain: Neurotrophin-3 (164 aa).

The N-terminal stretch at 1–3 (IQS) is a signal peptide. Residues 4 to 118 (TSMDQGBLSE…GLNRTSRRKR (115 aa)) constitute a propeptide that is removed on maturation. The tract at residues 89–126 (LLSENTPLEPPPLYLTEEPMGLNRTSRRKRFAEGKSHR) is disordered. Asn111 carries an N-linked (GlcNAc...) asparagine glycan.

The protein belongs to the NGF-beta family.

Its subcellular location is the secreted. Functionally, seems to promote the survival of visceral and proprioceptive sensory neurons. The sequence is that of Neurotrophin-3 (NTF3) from Cylindrophis ruffus (Red-tailed pipe snake).